The sequence spans 415 residues: Gamma-glutamyl phosphate reductase (415 aa).

It belongs to the gamma-glutamyl phosphate reductase family.

The protein resides in the cytoplasm. The catalysed reaction is L-glutamate 5-semialdehyde + phosphate + NADP(+) = L-glutamyl 5-phosphate + NADPH + H(+). The protein operates within amino-acid biosynthesis; L-proline biosynthesis; L-glutamate 5-semialdehyde from L-glutamate: step 2/2. Its function is as follows. Catalyzes the NADPH-dependent reduction of L-glutamate 5-phosphate into L-glutamate 5-semialdehyde and phosphate. The product spontaneously undergoes cyclization to form 1-pyrroline-5-carboxylate. This Bacillus thuringiensis subsp. konkukian (strain 97-27) protein is Gamma-glutamyl phosphate reductase.